We begin with the raw amino-acid sequence, 95 residues long: Large ribosomal subunit protein eL37x (95 aa).

Residues C19, C22, C34, and C37 each coordinate Zn(2+). The segment at 19 to 37 adopts a C4-type zinc-finger fold; that stretch reads CVRCGRRSFHIQKSRCSAC. The tract at residues 73–95 is disordered; the sequence is RFKTGFREGTEAKPRSKASASSA. Basic and acidic residues predominate over residues 77–86; that stretch reads GFREGTEAKP.

Belongs to the eukaryotic ribosomal protein eL37 family. Requires Zn(2+) as cofactor.

Functionally, binds to the 23S rRNA. The sequence is that of Large ribosomal subunit protein eL37x (RPL37C) from Arabidopsis thaliana (Mouse-ear cress).